The following is a 431-amino-acid chain: Enolase (431 aa).

Gln-167 is a (2R)-2-phosphoglycerate binding site. The active-site Proton donor is the Glu-209. Residues Asp-246, Glu-289, and Asp-316 each coordinate Mg(2+). Residues Lys-341, Arg-370, Ser-371, and Lys-392 each contribute to the (2R)-2-phosphoglycerate site. The Proton acceptor role is filled by Lys-341.

The protein belongs to the enolase family. As to quaternary structure, component of the RNA degradosome, a multiprotein complex involved in RNA processing and mRNA degradation. The cofactor is Mg(2+).

The protein resides in the cytoplasm. Its subcellular location is the secreted. It is found in the cell surface. It carries out the reaction (2R)-2-phosphoglycerate = phosphoenolpyruvate + H2O. It functions in the pathway carbohydrate degradation; glycolysis; pyruvate from D-glyceraldehyde 3-phosphate: step 4/5. In terms of biological role, catalyzes the reversible conversion of 2-phosphoglycerate (2-PG) into phosphoenolpyruvate (PEP). It is essential for the degradation of carbohydrates via glycolysis. The sequence is that of Enolase from Shewanella baltica (strain OS155 / ATCC BAA-1091).